We begin with the raw amino-acid sequence, 240 residues long: DNA repair protein RecO (240 aa).

The protein belongs to the RecO family.

Involved in DNA repair and RecF pathway recombination. The chain is DNA repair protein RecO from Wolbachia sp. subsp. Drosophila simulans (strain wRi).